Here is a 393-residue protein sequence, read N- to C-terminus: uncharacterized protein (393 aa).

Disordered regions lie at residues 77 to 118 and 259 to 296; these read DSNN…SIRP and INNN…DESN. Over residues 79-92 the composition is skewed to low complexity; it reads NNNNNNNNNNNNNN. Positions 103-114 are enriched in polar residues; sequence IRQSLSSPQQLV. The segment covering 259-289 has biased composition (low complexity); it reads INNNNNNNNNNSNNNNNNNNSNNNDNNNNIN.

This is an uncharacterized protein from Dictyostelium discoideum (Social amoeba).